The primary structure comprises 264 residues: Pro-opiomelanocortin (264 aa).

An N-terminal signal peptide occupies residues 1–26 (MPRSCCSRSGALLLALLLQASMEVRG). Position 87 is a phenylalanine amide (phenylalanine 87). Disordered stretches follow at residues 88–204 (GRRN…DLEH) and 219–238 (RMEH…GGFM). Asparagine 91 carries N-linked (GlcNAc...) asparagine glycosylation. Basic and acidic residues-rich tracts occupy residues 99–122 (QKRE…EPRG) and 130–142 (REGK…EHFR). Glutamate 131 is modified (glutamic acid 1-amide). Serine 135 is subject to N-acetylserine; in Corticotropin. Valine 147 bears the Valine amide mark. Position 165 is a phosphoserine (serine 165). The span at 172 to 186 (EFKRELTGQRPRAGD) shows a compositional bias: basic and acidic residues. Residues 189 to 199 (DGPADDGAGPR) are compositionally biased toward low complexity. Residues 219-234 (RMEHFRWGSPPKDKRY) show a composition bias toward basic and acidic residues.

This sequence belongs to the POMC family. Specific enzymatic cleavages at paired basic residues yield the different active peptides. In terms of tissue distribution, ACTH and MSH are produced by the pituitary gland.

The protein resides in the secreted. Functionally, stimulates the adrenal glands to release cortisol. Anorexigenic peptide. Increases the pigmentation of skin by increasing melanin production in melanocytes. In terms of biological role, increases the pigmentation of skin by increasing melanin production in melanocytes. Its function is as follows. Endogenous orexigenic opiate. Functionally, endogenous opiate. The polypeptide is Pro-opiomelanocortin (POMC) (Macaca nemestrina (Pig-tailed macaque)).